The following is a 487-amino-acid chain: 26S proteasome non-ATPase regulatory subunit 3 homolog B (487 aa).

The segment at 1 to 21 (MTQDVEMKDNQTPTQSVVSAP) is disordered. The span at 10-21 (NQTPTQSVVSAP) shows a compositional bias: polar residues. In terms of domain architecture, PCI spans 239-420 (CRYLFYLGKI…GCMVSKETGD (182 aa)). Residues 452–487 (PPNTHREKESEEKRREMKQQEEELAKYMAEEDDDDF) form a disordered region. Residues 455–480 (THREKESEEKRREMKQQEEELAKYMA) are compositionally biased toward basic and acidic residues.

The protein belongs to the proteasome subunit S3 family. Component of the 19S regulatory particle (RP/PA700) lid subcomplex of the 26S proteasome. The 26S proteasome is composed of a core protease (CP), known as the 20S proteasome, capped at one or both ends by the 19S regulatory particle (RP/PA700). The RP/PA700 complex is composed of at least 17 different subunits in two subcomplexes, the base and the lid, which form the portions proximal and distal to the 20S proteolytic core, respectively. Interacts with UCH1 and UCH2. Preferentially expressed in flowers.

Its function is as follows. Acts as a regulatory subunit of the 26 proteasome which is involved in the ATP-dependent degradation of ubiquitinated proteins. In Arabidopsis thaliana (Mouse-ear cress), this protein is 26S proteasome non-ATPase regulatory subunit 3 homolog B.